Here is a 255-residue protein sequence, read N- to C-terminus: Glucanase inhibitor protein 4 (255 aa).

Residues 1-21 form the signal peptide; that stretch reads MKSITTASFALILFGVGAASA. The 227-residue stretch at 29 to 255 folds into the Peptidase S1 domain; it reads VLGGGAVPSG…ESLGMDQLGH (227 aa). Residues Cys-56 and Cys-72 are joined by a disulfide bond. N-linked (GlcNAc...) asparagine glycans are attached at residues Asn-90, Asn-105, Asn-110, and Asn-160. 2 cysteine pairs are disulfide-bonded: Cys-180/Cys-192 and Cys-202/Cys-235.

It belongs to the peptidase S1 family. As to quaternary structure, forms an apoplastic complex with host endoglucanases in tomato leaves during P.infestans infection.

It is found in the secreted. Its function is as follows. Secreted effector that suppresses host plant glucan elicitor-mediated defense responses. Targets host endoglucanases and inhibits the endoglucanase-mediated release of elicitor-active glucan oligosaccharides from P.infestans cell walls. This is Glucanase inhibitor protein 4 from Phytophthora infestans (Potato late blight agent).